A 138-amino-acid chain; its full sequence is Transcription antitermination protein NusB (138 aa).

This sequence belongs to the NusB family.

Functionally, involved in transcription antitermination. Required for transcription of ribosomal RNA (rRNA) genes. Binds specifically to the boxA antiterminator sequence of the ribosomal RNA (rrn) operons. In Helicobacter pylori (strain J99 / ATCC 700824) (Campylobacter pylori J99), this protein is Transcription antitermination protein NusB.